Here is a 710-residue protein sequence, read N- to C-terminus: Cleavage and polyadenylation factor complex subunit C74.02c (710 aa).

Polar residues predominate over residues 1–30; the sequence is MDNWNSVRNVSSDRQTSKTSENPPHTSNEY. 3 disordered regions span residues 1–42, 85–170, and 361–510; these read MDNW…LSPD, ASSN…SDVN, and GPAM…SVSW. The segment covering 86–108 has biased composition (low complexity); sequence SSNPSLISSGSSQTGSPSQSLSS. Over residues 109-170 the composition is skewed to polar residues; it reads NKEPSSPGIS…EVPSSKSDVN (62 aa). 2 stretches are compositionally biased toward low complexity: residues 361–383 and 401–420; these read GPAM…SSNS and LASS…PLTK. Residues 421 to 430 are compositionally biased toward polar residues; the sequence is QQTNPSTPLS. Residues 437–447 show a composition bias toward basic and acidic residues; sequence KGREKEKDKDS.

In terms of assembly, component of the cleavage and polyadenylation factor (CPF) complex.

The protein resides in the cytoplasm. It localises to the nucleus. In terms of biological role, RNA-binding component of the cleavage and polyadenylation factor (CPF) complex, which plays a key role in polyadenylation-dependent pre-mRNA 3'-end formation. Involved in poly(A) site recognition. May be involved in coupling transcription termination and mRNA 3'-end formation. The chain is Cleavage and polyadenylation factor complex subunit C74.02c from Schizosaccharomyces pombe (strain 972 / ATCC 24843) (Fission yeast).